Reading from the N-terminus, the 193-residue chain is dTTP/UTP pyrophosphatase (193 aa).

The active-site Proton acceptor is Asp-70.

This sequence belongs to the Maf family. YhdE subfamily. It depends on a divalent metal cation as a cofactor.

The protein resides in the cytoplasm. It carries out the reaction dTTP + H2O = dTMP + diphosphate + H(+). It catalyses the reaction UTP + H2O = UMP + diphosphate + H(+). In terms of biological role, nucleoside triphosphate pyrophosphatase that hydrolyzes dTTP and UTP. May have a dual role in cell division arrest and in preventing the incorporation of modified nucleotides into cellular nucleic acids. The polypeptide is dTTP/UTP pyrophosphatase (Ruminiclostridium cellulolyticum (strain ATCC 35319 / DSM 5812 / JCM 6584 / H10) (Clostridium cellulolyticum)).